Consider the following 127-residue polypeptide: Aspartate 1-decarboxylase (127 aa).

The active-site Schiff-base intermediate with substrate; via pyruvic acid is serine 25. Serine 25 carries the pyruvic acid (Ser) modification. Threonine 57 contacts substrate. The active-site Proton donor is tyrosine 58. Residue 73–75 (GAA) coordinates substrate.

The protein belongs to the PanD family. In terms of assembly, heterooctamer of four alpha and four beta subunits. The cofactor is pyruvate. In terms of processing, is synthesized initially as an inactive proenzyme, which is activated by self-cleavage at a specific serine bond to produce a beta-subunit with a hydroxyl group at its C-terminus and an alpha-subunit with a pyruvoyl group at its N-terminus.

The protein resides in the cytoplasm. It carries out the reaction L-aspartate + H(+) = beta-alanine + CO2. It functions in the pathway cofactor biosynthesis; (R)-pantothenate biosynthesis; beta-alanine from L-aspartate: step 1/1. Functionally, catalyzes the pyruvoyl-dependent decarboxylation of aspartate to produce beta-alanine. In Listeria monocytogenes serotype 4b (strain CLIP80459), this protein is Aspartate 1-decarboxylase.